Reading from the N-terminus, the 420-residue chain is Mannose-1-phosphate guanylyltransferase regulatory subunit alpha (420 aa).

The tract at residues 2–251 (LKAVILIGGP…DGIWSQIKSA (250 aa)) is substrate-binding domain. GDP-alpha-D-mannose contacts are provided by E85 and Q247. The tract at residues 273–420 (LAKHTPGGPR…SRSFTNQIIL (148 aa)) is hexapeptide repeat domain. A C-loop region spans residues 356 to 384 (TPNDPNPNDPRARMDSESLFKDGKLLPAI).

This sequence belongs to the transferase hexapeptide repeat family. In terms of assembly, component of the GMPPA-GMPPB mannose-1-phosphate guanylyltransferase complex composed of 4 GMPPA subunits and 8 GMPPB subunits; the complex is organized into three layers, a central layer made up of 2 GMPPA dimers sandwiched between two layers each made up of 2 GMPPB dimers.

Its subcellular location is the cytoplasm. In terms of biological role, regulatory subunit of the GMPPA-GMPPB mannose-1-phosphate guanylyltransferase complex; reduces the catalytic activity of GMPPB when part of the complex. Mediates allosteric feedback inhibition of GMPPB catalytic activity upon binding GDP-alpha-D-mannose. Together with GMPPB regulates GDP-alpha-D-mannose levels. The protein is Mannose-1-phosphate guanylyltransferase regulatory subunit alpha (GMPPA) of Papio anubis (Olive baboon).